Consider the following 89-residue polypeptide: Small ribosomal subunit protein bS20 (89 aa).

The protein belongs to the bacterial ribosomal protein bS20 family.

In terms of biological role, binds directly to 16S ribosomal RNA. The protein is Small ribosomal subunit protein bS20 of Wolbachia sp. subsp. Brugia malayi (strain TRS).